A 333-amino-acid chain; its full sequence is Phosphoribosylformylglycinamidine cyclo-ligase (333 aa).

This sequence belongs to the AIR synthase family.

The protein localises to the cytoplasm. The enzyme catalyses 2-formamido-N(1)-(5-O-phospho-beta-D-ribosyl)acetamidine + ATP = 5-amino-1-(5-phospho-beta-D-ribosyl)imidazole + ADP + phosphate + H(+). It participates in purine metabolism; IMP biosynthesis via de novo pathway; 5-amino-1-(5-phospho-D-ribosyl)imidazole from N(2)-formyl-N(1)-(5-phospho-D-ribosyl)glycinamide: step 2/2. In Methanosarcina acetivorans (strain ATCC 35395 / DSM 2834 / JCM 12185 / C2A), this protein is Phosphoribosylformylglycinamidine cyclo-ligase.